Consider the following 243-residue polypeptide: tRNA1(Val) (adenine(37)-N6)-methyltransferase (243 aa).

This sequence belongs to the methyltransferase superfamily. tRNA (adenine-N(6)-)-methyltransferase family.

The protein resides in the cytoplasm. It catalyses the reaction adenosine(37) in tRNA1(Val) + S-adenosyl-L-methionine = N(6)-methyladenosine(37) in tRNA1(Val) + S-adenosyl-L-homocysteine + H(+). In terms of biological role, specifically methylates the adenine in position 37 of tRNA(1)(Val) (anticodon cmo5UAC). The sequence is that of tRNA1(Val) (adenine(37)-N6)-methyltransferase from Shewanella loihica (strain ATCC BAA-1088 / PV-4).